A 199-amino-acid polypeptide reads, in one-letter code: NAD(P)H dehydrogenase (quinone) (199 aa).

The Flavodoxin-like domain maps to 4 to 190; it reads VLVLYYSAYG…EAAKYQGAHV (187 aa). FMN-binding positions include 10-15 and 78-80; these read SAYGHI and TRF. Tyr12 is a binding site for NAD(+). Trp98 is a binding site for substrate. Residues 113–119 and His134 each bind FMN; that span reads SSATQHG.

It belongs to the WrbA family. FMN is required as a cofactor.

The enzyme catalyses a quinone + NADH + H(+) = a quinol + NAD(+). The catalysed reaction is a quinone + NADPH + H(+) = a quinol + NADP(+). This chain is NAD(P)H dehydrogenase (quinone), found in Rhizobium rhizogenes (strain K84 / ATCC BAA-868) (Agrobacterium radiobacter).